Consider the following 597-residue polypeptide: 66 kDa protein (597 aa).

Disordered regions lie at residues 62-82 (VRLQ…PSLQ), 160-198 (HSVP…FRQH), 218-315 (NQLA…SCRV), 329-411 (HFKS…LHHD), and 535-586 (SSPQ…ASAL). Polar residues predominate over residues 64–80 (LQSSPPRGPQSDRNLPS). Over residues 218–234 (NQLAQAQQHPLPSSKPL) the composition is skewed to polar residues. Residues 273-291 (PSSRGHLPSSTSSSSPRSN) are compositionally biased toward low complexity. The segment covering 305–315 (SNSQDLRSCRV) has biased composition (polar residues). A compositionally biased stretch (basic residues) spans 389 to 400 (QTHHARLPHSKR). Over residues 535 to 574 (SSPQSHSSESLRGDSPPSSHLPSSPSSACSGDSFASCSSF) the composition is skewed to low complexity. The segment covering 575 to 584 (GPSNPTSSAS) has biased composition (polar residues).

The protein belongs to the tymoviridae protein p69 family.

This is 66 kDa protein from Ononis.